The sequence spans 344 residues: DNA-directed RNA polymerase subunit alpha (344 aa).

The segment at 1–238 (MKVIKTAPLI…KQLGVFGERP (238 aa)) is alpha N-terminal domain (alpha-NTD). The interval 253-344 (DAKDLSAKIE…EKLEDKGGND (92 aa)) is alpha C-terminal domain (alpha-CTD).

It belongs to the RNA polymerase alpha chain family. Homodimer. The RNAP catalytic core consists of 2 alpha, 1 beta, 1 beta' and 1 omega subunit. When a sigma factor is associated with the core the holoenzyme is formed, which can initiate transcription.

The catalysed reaction is RNA(n) + a ribonucleoside 5'-triphosphate = RNA(n+1) + diphosphate. In terms of biological role, DNA-dependent RNA polymerase catalyzes the transcription of DNA into RNA using the four ribonucleoside triphosphates as substrates. The protein is DNA-directed RNA polymerase subunit alpha of Helicobacter pylori (strain HPAG1).